The primary structure comprises 429 residues: Histidine--tRNA ligase (429 aa).

Belongs to the class-II aminoacyl-tRNA synthetase family. Homodimer.

It localises to the cytoplasm. The enzyme catalyses tRNA(His) + L-histidine + ATP = L-histidyl-tRNA(His) + AMP + diphosphate + H(+). This Streptococcus pneumoniae (strain JJA) protein is Histidine--tRNA ligase.